Consider the following 963-residue polypeptide: VPS35 endosomal protein-sorting factor-like (963 aa).

The tract at residues 43 to 112 (SKTKKVSRKG…DKDENSFVGP (70 aa)) is disordered. The span at 51-72 (KGSTSSTSSSSSSSVIDPLSSV) shows a compositional bias: low complexity. Position 265 is a phosphoserine (serine 265). The chain crosses the membrane as a helical span at residues 699–719 (AFVRACVAYCFITIPSLVGIF).

This sequence belongs to the VPS35L family. As to quaternary structure, component of the heterotrimeric retriever complex formed by VPS26C, VPS29 and VPS35L. Interacts with VPS29. Interacts with COMMD1, CCDC93 and CCDC22; associates with the CCC (COMMD/CCDC22/CCDC93) complex which contains at least COMMD1 (and possibly other COMM domain-containing proteins), CCDC22 and CCDC93. Interacts with WASHC1, WASHC2A and WASHC2C. Interacts with SNX17 and SNX31.

It localises to the membrane. The protein resides in the endosome. Functionally, acts as a component of the retriever complex. The retriever complex is a heterotrimeric complex related to retromer cargo-selective complex (CSC) and essential for retromer-independent retrieval and recycling of numerous cargos such as integrin alpha-5/beta-1 (ITGA5:ITGB1). The recruitment of the retriever complex to the endosomal membrane involves CCC and WASH complexes. In the endosomes, drives the retrieval and recycling of NxxY-motif-containing cargo proteins by coupling to SNX17, a cargo essential for the homeostatic maintenance of numerous cell surface proteins associated with processes that include cell migration, cell adhesion, nutrient supply and cell signaling. Involved in copper-dependent ATP7A trafficking between the trans-Golgi network and vesicles in the cell periphery; the function is proposed to depend on its association with the CCC complex and cooperation with the WASH complex on early endosomes. Seems not to be required for CCC complex stability. The sequence is that of VPS35 endosomal protein-sorting factor-like from Mus musculus (Mouse).